Reading from the N-terminus, the 240-residue chain is MATLFIADLHLCVEEPAITAGFLRFLAGEARKADALYILGDLFEAWIGDDEPNPLHRQMAAAIKAVSDSGVPCYFIHGNRDFLLGKRFARESGMTLLPEEKVLELYGRRVLIMHGDTLCTDDAGYQAFRAKVHKPWLQMLFLALPLFVRKRIAARMRANSKEANSSKSLAIMDVNQNAVVSAMEKHQVQWLIHGHTHRPAVHELIANQQPAFRVVLGAWHTEGSMVKVTADDVELIHFPF.

Residues D8, H10, D41, N79, and H114 each contribute to the Mn(2+) site. 79-80 contributes to the substrate binding site; sequence NR. D122, S160, N164, K167, and H195 together coordinate substrate. Residues H195 and H197 each coordinate Mn(2+).

Belongs to the LpxH family. Requires Mn(2+) as cofactor.

It is found in the cell inner membrane. It carries out the reaction UDP-2-N,3-O-bis[(3R)-3-hydroxytetradecanoyl]-alpha-D-glucosamine + H2O = 2-N,3-O-bis[(3R)-3-hydroxytetradecanoyl]-alpha-D-glucosaminyl 1-phosphate + UMP + 2 H(+). The protein operates within glycolipid biosynthesis; lipid IV(A) biosynthesis; lipid IV(A) from (3R)-3-hydroxytetradecanoyl-[acyl-carrier-protein] and UDP-N-acetyl-alpha-D-glucosamine: step 4/6. In terms of biological role, hydrolyzes the pyrophosphate bond of UDP-2,3-diacylglucosamine to yield 2,3-diacylglucosamine 1-phosphate (lipid X) and UMP by catalyzing the attack of water at the alpha-P atom. Involved in the biosynthesis of lipid A, a phosphorylated glycolipid that anchors the lipopolysaccharide to the outer membrane of the cell. This Shigella sonnei (strain Ss046) protein is UDP-2,3-diacylglucosamine hydrolase.